Reading from the N-terminus, the 443-residue chain is MSTTDSIVSSQAKQSSWRKSDTTWTLGLFGTAIGAGVLFFPIRAGFGGLIPILLMLVLAYPIAFYCHRALARLCLSGSNPSGNITETVEEHFGKTGGVVITFLYFFAICPLLWIYGVTITNTFMTFWENQLQMPALNRGFVALFLLLLMAFVIWFGKDLMVKVMSYLVWPFIASLVLISLSLIPYWNSAVIDQVDLSNIALTGHDGILVTVWLGISIMVFSFNFSPIVSSFVVSKREEYEKEFGREFTERKCSQIISRASMLMVAVVMFFAFSCLFTLSPQNMADAKAQNIPVLSYLANHFASLSGTKSTFATVLEYGASIIALVAIFKSFFGHYLGTLEGLNGLVLKFGYKGDKTKVSMGKLNTISMIFIMGSTWVVAYANPNILDLIEAMGAPIIASLLCLLPMYAIRKAPSLAKYRGRLDNVFVTLIGLLTILNIVYKLF.

A run of 11 helical transmembrane segments spans residues threonine 22–isoleucine 42, alanine 44–phenylalanine 64, glycine 97–valine 117, phenylalanine 140–methionine 160, valine 163–isoleucine 183, isoleucine 207–isoleucine 227, alanine 259–serine 279, alanine 319–leucine 339, isoleucine 366–leucine 386, isoleucine 389–isoleucine 409, and aspartate 423–phenylalanine 443.

Belongs to the amino acid/polyamine transporter 2 family. SdaC/TdcC subfamily.

It localises to the cell inner membrane. It carries out the reaction L-threonine(in) + H(+)(in) = L-threonine(out) + H(+)(out). It catalyses the reaction L-serine(in) + H(+)(in) = L-serine(out) + H(+)(out). Its function is as follows. Involved in the import of threonine and serine into the cell, with the concomitant import of a proton (symport system). The sequence is that of Threonine/serine transporter TdcC from Salmonella paratyphi A (strain ATCC 9150 / SARB42).